The primary structure comprises 342 residues: Phosphate acyltransferase (342 aa).

This sequence belongs to the PlsX family. Homodimer. Probably interacts with PlsY.

It is found in the cytoplasm. The enzyme catalyses a fatty acyl-[ACP] + phosphate = an acyl phosphate + holo-[ACP]. Its pathway is lipid metabolism; phospholipid metabolism. Its function is as follows. Catalyzes the reversible formation of acyl-phosphate (acyl-PO(4)) from acyl-[acyl-carrier-protein] (acyl-ACP). This enzyme utilizes acyl-ACP as fatty acyl donor, but not acyl-CoA. The chain is Phosphate acyltransferase from Legionella pneumophila (strain Paris).